The primary structure comprises 78 residues: Large ribosomal subunit protein eL38 (78 aa).

This sequence belongs to the eukaryotic ribosomal protein eL38 family.

The polypeptide is Large ribosomal subunit protein eL38 (RpL38) (Maconellicoccus hirsutus (Pink hibiscus mealybug)).